Consider the following 253-residue polypeptide: Indole-3-glycerol phosphate synthase (253 aa).

This sequence belongs to the TrpC family.

The catalysed reaction is 1-(2-carboxyphenylamino)-1-deoxy-D-ribulose 5-phosphate + H(+) = (1S,2R)-1-C-(indol-3-yl)glycerol 3-phosphate + CO2 + H2O. Its pathway is amino-acid biosynthesis; L-tryptophan biosynthesis; L-tryptophan from chorismate: step 4/5. This is Indole-3-glycerol phosphate synthase from Exiguobacterium sp. (strain ATCC BAA-1283 / AT1b).